The primary structure comprises 264 residues: Thiazole synthase (264 aa).

The Schiff-base intermediate with DXP role is filled by Lys-106. 1-deoxy-D-xylulose 5-phosphate is bound by residues Gly-167, 193-194 (AG), and 215-216 (NS).

The protein belongs to the ThiG family. As to quaternary structure, homotetramer. Forms heterodimers with either ThiH or ThiS.

It localises to the cytoplasm. It catalyses the reaction [ThiS sulfur-carrier protein]-C-terminal-Gly-aminoethanethioate + 2-iminoacetate + 1-deoxy-D-xylulose 5-phosphate = [ThiS sulfur-carrier protein]-C-terminal Gly-Gly + 2-[(2R,5Z)-2-carboxy-4-methylthiazol-5(2H)-ylidene]ethyl phosphate + 2 H2O + H(+). The protein operates within cofactor biosynthesis; thiamine diphosphate biosynthesis. In terms of biological role, catalyzes the rearrangement of 1-deoxy-D-xylulose 5-phosphate (DXP) to produce the thiazole phosphate moiety of thiamine. Sulfur is provided by the thiocarboxylate moiety of the carrier protein ThiS. In vitro, sulfur can be provided by H(2)S. The polypeptide is Thiazole synthase (Pseudomonas savastanoi pv. phaseolicola (strain 1448A / Race 6) (Pseudomonas syringae pv. phaseolicola (strain 1448A / Race 6))).